A 190-amino-acid chain; its full sequence is Dynactin subunit 6 (190 aa).

T186 bears the Phosphothreonine mark.

The protein belongs to the dynactin subunits 5/6 family. Dynactin subunit 6 subfamily. In terms of assembly, subunit of dynactin, a multiprotein complex part of a tripartite complex with dynein and a adapter, such as BICDL1, BICD2 or HOOK3. The dynactin complex is built around ACTR1A/ACTB filament and consists of an actin-related filament composed of a shoulder domain, a pointed end and a barbed end. Its length is defined by its flexible shoulder domain. The soulder is composed of 2 DCTN1 subunits, 4 DCTN2 and 2 DCTN3. The 4 DCNT2 (via N-terminus) bind the ACTR1A filament and act as molecular rulers to determine the length. The pointed end is important for binding dynein-dynactin cargo adapters. Consists of 4 subunits: ACTR10, DCNT4, DCTN5 and DCTN6. Within the complex DCTN6 forms a heterodimer with DCTN5. The barbed end is composed of a CAPZA1:CAPZB heterodimers, which binds ACTR1A/ACTB filament and dynactin and stabilizes dynactin. Interacts with PLK1. Interacts with N4BP2L1. In terms of processing, phosphorylation at Thr-186 by CDK1 during mitotic prometaphase creates a binding site for PLK1 that facilitates its recruitment to kinetochores.

The protein resides in the cytoplasm. Its subcellular location is the cytoskeleton. It localises to the chromosome. The protein localises to the centromere. It is found in the kinetochore. Functionally, part of the dynactin complex that activates the molecular motor dynein for ultra-processive transport along microtubules. This is Dynactin subunit 6 (DCTN6) from Sus scrofa (Pig).